The primary structure comprises 414 residues: E3 ubiquitin-protein ligase makorin-2 (414 aa).

C3H1-type zinc fingers lie at residues 2-29 (STKQ…HDLT) and 31-58 (SKPS…HIKP). Residues 57 to 94 (KPPGRGSGAPADHSNRSSSSAGASAPGPGPPANTSKHL) are disordered. Residues 73–82 (SSSSAGASAP) are compositionally biased toward low complexity. The C3H1-type 3 zinc-finger motif lies at 164–191 (QTSPQICPFLAAGQCQYGESCPYLHGEM). A makorin-type Cys-His region spans residues 192 to 221 (CEICRQHVLHPHDPEQRAAHEKKCMVAFEM). An RING-type zinc finger spans residues 237–291 (CKICLDVVYEKSSPSERRFGILSSCAHTYCLNCIRQWRCVEQLHNQIRKSCPECR). The C3H1-type 4 zinc-finger motif lies at 320–349 (GVSKKACKYFDQGRGTCPFGGKCFYMHAYA).

The protein localises to the cytoplasm. It is found in the nucleus. It carries out the reaction S-ubiquitinyl-[E2 ubiquitin-conjugating enzyme]-L-cysteine + [acceptor protein]-L-lysine = [E2 ubiquitin-conjugating enzyme]-L-cysteine + N(6)-ubiquitinyl-[acceptor protein]-L-lysine.. Its pathway is protein modification; protein ubiquitination. Functionally, E3 ubiquitin ligase catalyzing the covalent attachment of ubiquitin moieties onto substrate proteins. Inhibits neurogenesis and axis formation during embryonic development by modulating the phosphatidylinositol 3-kinase (PI3K) pathway. Acts downstream of PI3K and akt1 to up-regulate gsk3b mRNA expression. This Danio rerio (Zebrafish) protein is E3 ubiquitin-protein ligase makorin-2 (mkrn2).